Consider the following 541-residue polypeptide: Putative asparagine synthetase [glutamine-hydrolyzing] 1 (541 aa).

Cys-2 functions as the For GATase activity in the catalytic mechanism. Residues 2–213 (CSISGIIVKD…PNSQLIYYLD (212 aa)) form the Glutamine amidotransferase type-2 domain. L-glutamine-binding positions include 68-72 (RLAIV), 92-94 (NGE), and Asp-116. ATP-binding positions include Val-289 and 363-364 (SG).

Belongs to the asparagine synthetase family.

It carries out the reaction L-aspartate + L-glutamine + ATP + H2O = L-asparagine + L-glutamate + AMP + diphosphate + H(+). The protein operates within amino-acid biosynthesis; L-asparagine biosynthesis; L-asparagine from L-aspartate (L-Gln route): step 1/1. This chain is Putative asparagine synthetase [glutamine-hydrolyzing] 1, found in Methanocaldococcus jannaschii (strain ATCC 43067 / DSM 2661 / JAL-1 / JCM 10045 / NBRC 100440) (Methanococcus jannaschii).